The sequence spans 120 residues: uncharacterized protein (120 aa).

This is an uncharacterized protein from Acanthamoeba polyphaga mimivirus (APMV).